The sequence spans 206 residues: KH domain-containing protein 3 (206 aa).

The segment at 1–40 (MDTPRRFPTLVQLMQPKAMPVEVLGHLPKRFSWFHSEFLK) is involved in RNA binding. The region spanning 40–103 (KNPKVVRLEV…SYQEDTIKMI (64 aa)) is the KH; atypical domain. Residues 144–153 (GTQRSVEVRE) are compositionally biased toward basic and acidic residues. A disordered region spans residues 144-206 (GTQRSVEVRE…EDTRAPVTRL (63 aa)). Phosphothreonine is present on threonine 145. The segment covering 166–183 (TGTQQSLEAANQSGTQRS) has biased composition (polar residues). Serine 171 bears the Phosphoserine mark.

This sequence belongs to the KHDC1 family. In terms of assembly, component of the subcortical maternal complex (SCMC), at least composed of NLRP5, KHDC3L, OOEP, and TLE6. Within the complex, interacts with NLRP5, KHDC3L and TLE6. The SCMC may facilitate translocation of its components between the nuclear and cytoplasmic compartments. Forms a scaffold complex with OOEP/FLOPED, and interacts with BLM and TRIM25 at DNA replication forks. Interacts with PARP1; the interaction is increased following the formation of DNA double-strand breaks. Interacts with NUMA1.

It localises to the cytoplasm. The protein resides in the cell cortex. It is found in the nucleus. The protein localises to the mitochondrion. Its subcellular location is the cytoskeleton. It localises to the microtubule organizing center. The protein resides in the centrosome. It is found in the chromosome. Its function is as follows. Component of the subcortical maternal complex (SCMC), a multiprotein complex that plays a key role in early embryonic development. The SCMC complex is a structural constituent of cytoplasmic lattices, which consist in fibrous structures found in the cytoplasm of oocytes and preimplantation embryos. They are required to store maternal proteins critical for embryonic development, such as proteins that control epigenetic reprogramming of the preimplantation embryo, and prevent their degradation or activation. KHDC3 ensures proper spindle assembly by regulating the localization of AURKA via RHOA signaling and of PLK1 via a RHOA-independent process. Required for the localization of MAD2L1 to kinetochores to enable spindle assembly checkpoint function. As part of the OOEP-KHDC3 scaffold, recruits BLM and TRIM25 to DNA replication forks, thereby promoting the ubiquitination of BLM by TRIM25, enhancing BLM retainment at replication forks and therefore promoting stalled replication fork restart. Regulates homologous recombination-mediated DNA repair via recruitment of RAD51 to sites of DNA double-strand breaks, and sustainment of PARP1 activity, which in turn modulates downstream ATM or ATR activation. Activation of ATM or ATR in response to DNA double-strand breaks may be cell-type specific. Its role in DNA double-strand break repair is independent of its role in restarting stalled replication forks. Promotes neural stem cell neurogenesis and neuronal differentiation in the hippocampus. May regulate normal development of learning, memory and anxiety. Capable of binding RNA. This Macaca mulatta (Rhesus macaque) protein is KH domain-containing protein 3 (KHDC3L).